A 379-amino-acid polypeptide reads, in one-letter code: Trans-prenyltransferase abpB (379 aa).

Substrate contacts are provided by residues 90–91, R112, K197, R264, K266, Y268, and Y338; that span reads RL.

This sequence belongs to the tryptophan dimethylallyltransferase family.

The catalysed reaction is aspulvinone E + 2 dimethylallyl diphosphate = aspulvinone H + 2 diphosphate. It catalyses the reaction butyrolactone II + dimethylallyl diphosphate = butyrolactone I + diphosphate. It functions in the pathway secondary metabolite biosynthesis. Functionally, trans-prenyltransferase that acts in both the aspulvinones and butyrolactones pathways. Prenylates aspulvinone E and butyrolactone II to yield repectively aspulvinone H and butyrolactone I. The protein is Trans-prenyltransferase abpB of Aspergillus terreus (strain NIH 2624 / FGSC A1156).